We begin with the raw amino-acid sequence, 366 residues long: tRNA/tmRNA (uracil-C(5))-methyltransferase (366 aa).

S-adenosyl-L-methionine contacts are provided by Q190, Y218, N223, E239, and D299. Residue C324 is the Nucleophile of the active site. E358 serves as the catalytic Proton acceptor.

It belongs to the class I-like SAM-binding methyltransferase superfamily. RNA M5U methyltransferase family. TrmA subfamily.

The catalysed reaction is uridine(54) in tRNA + S-adenosyl-L-methionine = 5-methyluridine(54) in tRNA + S-adenosyl-L-homocysteine + H(+). The enzyme catalyses uridine(341) in tmRNA + S-adenosyl-L-methionine = 5-methyluridine(341) in tmRNA + S-adenosyl-L-homocysteine + H(+). In terms of biological role, dual-specificity methyltransferase that catalyzes the formation of 5-methyluridine at position 54 (m5U54) in all tRNAs, and that of position 341 (m5U341) in tmRNA (transfer-mRNA). This chain is tRNA/tmRNA (uracil-C(5))-methyltransferase, found in Klebsiella pneumoniae subsp. pneumoniae (strain ATCC 700721 / MGH 78578).